Reading from the N-terminus, the 206-residue chain is MSRTLVLVRHGQSEWNLKNLFTGWRDPGLTEQGHAEAKAAGQRLKAAGLKFDIAYTSALSRAQVTCQHILDELGQPGLETIRDQALNERDYGDLSGLNKDDARAKWGEEQVHIWRRSYDVPPPGGESLKDTGARVWPYYLHTIQPHVLREETVLVAAHGNSLRALIMALEGLTPEQILKQELNTGVPIIYRLNADSTVASKEILSA.

Substrate is bound by residues 9–16, 22–23, Arg-61, 88–91, Lys-99, 115–116, and 159–160; these read RHGQSEWN, TG, ERDY, RR, and GN. The active-site Tele-phosphohistidine intermediate is the His-10. Glu-88 acts as the Proton donor/acceptor in catalysis.

This sequence belongs to the phosphoglycerate mutase family. BPG-dependent PGAM subfamily. In terms of assembly, homodimer.

It carries out the reaction (2R)-2-phosphoglycerate = (2R)-3-phosphoglycerate. It participates in carbohydrate degradation; glycolysis; pyruvate from D-glyceraldehyde 3-phosphate: step 3/5. In terms of biological role, catalyzes the interconversion of 2-phosphoglycerate and 3-phosphoglycerate. The sequence is that of 2,3-bisphosphoglycerate-dependent phosphoglycerate mutase from Brucella melitensis biotype 2 (strain ATCC 23457).